The primary structure comprises 313 residues: Dimethyladenosine transferase (313 aa).

The segment at 1-21 (MPKVKSGAIGRRRGRQEQRRE) is disordered. S-adenosyl-L-methionine contacts are provided by histidine 37, leucine 39, glycine 64, glutamate 85, aspartate 113, and asparagine 128.

The protein belongs to the class I-like SAM-binding methyltransferase superfamily. rRNA adenine N(6)-methyltransferase family. In terms of assembly, part of the small subunit (SSU) processome, composed of more than 70 proteins and the RNA chaperone small nucleolar RNA (snoRNA) U3.

The protein localises to the nucleus. Its subcellular location is the nucleoplasm. It is found in the nucleolus. It catalyses the reaction adenosine(1779)/adenosine(1780) in 18S rRNA + 4 S-adenosyl-L-methionine = N(6)-dimethyladenosine(1779)/N(6)-dimethyladenosine(1780) in 18S rRNA + 4 S-adenosyl-L-homocysteine + 4 H(+). Its function is as follows. Specifically dimethylates two adjacent adenosines in the loop of a conserved hairpin near the 3'-end of 18S rRNA in the 40S particle. Involved in the pre-rRNA processing steps leading to small-subunit rRNA production independently of its RNA-modifying catalytic activity. Part of the small subunit (SSU) processome, first precursor of the small eukaryotic ribosomal subunit. During the assembly of the SSU processome in the nucleolus, many ribosome biogenesis factors, an RNA chaperone and ribosomal proteins associate with the nascent pre-rRNA and work in concert to generate RNA folding, modifications, rearrangements and cleavage as well as targeted degradation of pre-ribosomal RNA by the RNA exosome. This chain is Dimethyladenosine transferase, found in Homo sapiens (Human).